Reading from the N-terminus, the 366-residue chain is 3-isopropylmalate dehydrogenase (366 aa).

78–91 provides a ligand contact to NAD(+); that stretch reads GPQWTHLKGSESPE. The substrate site is built by R99, R109, R138, and D227. Mg(2+) is bound by residues D227, D251, and D255. Residue 285–297 coordinates NAD(+); it reads GSAPDIAEKNIAN.

This sequence belongs to the isocitrate and isopropylmalate dehydrogenases family. LeuB type 1 subfamily. In terms of assembly, homodimer. The cofactor is Mg(2+). It depends on Mn(2+) as a cofactor.

The protein localises to the cytoplasm. The catalysed reaction is (2R,3S)-3-isopropylmalate + NAD(+) = 4-methyl-2-oxopentanoate + CO2 + NADH. It functions in the pathway amino-acid biosynthesis; L-leucine biosynthesis; L-leucine from 3-methyl-2-oxobutanoate: step 3/4. Its function is as follows. Catalyzes the oxidation of 3-carboxy-2-hydroxy-4-methylpentanoate (3-isopropylmalate) to 3-carboxy-4-methyl-2-oxopentanoate. The product decarboxylates to 4-methyl-2 oxopentanoate. This is 3-isopropylmalate dehydrogenase from Blochmanniella pennsylvanica (strain BPEN).